The following is a 91-amino-acid chain: Insertion element IS1 1 protein InsA (91 aa).

Belongs to the IS1 elements InsA family.

Functionally, absolutely required for transposition of IS1. This chain is Insertion element IS1 1 protein InsA (insA1), found in Escherichia coli (strain K12).